The following is a 501-amino-acid chain: Cytoplasmic tRNA 2-thiolation protein 2 (501 aa).

A compositionally biased stretch (basic and acidic residues) spans 1 to 12; that stretch reads MCEMSEEYRESA. 2 disordered regions span residues 1–23 and 192–214; these read MCEM…RLGT and GVER…PTTA. At C2 the chain carries N-acetylcysteine. The residue at position 492 (S492) is a Phosphoserine.

It belongs to the CTU2/NCS2 family. In terms of assembly, component of a complex at least composed of URM1, CTU2/NCS2 and CTU1/ATPBD3.

Its subcellular location is the cytoplasm. Its pathway is tRNA modification; 5-methoxycarbonylmethyl-2-thiouridine-tRNA biosynthesis. Its function is as follows. Plays a central role in 2-thiolation of mcm(5)S(2)U at tRNA wobble positions of tRNA(Lys), tRNA(Glu) and tRNA(Gln). May act by forming a heterodimer with CTU1/ATPBD3 that ligates sulfur from thiocarboxylated URM1 onto the uridine of tRNAs at wobble position. The protein is Cytoplasmic tRNA 2-thiolation protein 2 of Bos taurus (Bovine).